The chain runs to 246 residues: Probable transcriptional regulatory protein CLK_2466 (246 aa).

The protein belongs to the TACO1 family.

Its subcellular location is the cytoplasm. The chain is Probable transcriptional regulatory protein CLK_2466 from Clostridium botulinum (strain Loch Maree / Type A3).